The primary structure comprises 48 residues: Cuticle protein 10 (48 aa).

This is Cuticle protein 10 from Limulus polyphemus (Atlantic horseshoe crab).